The following is a 242-amino-acid chain: Large ribosomal subunit protein uL3 (242 aa).

An N5-methylglutamine modification is found at Q151.

This sequence belongs to the universal ribosomal protein uL3 family. In terms of assembly, part of the 50S ribosomal subunit. Forms a cluster with proteins L14 and L19. Methylated by PrmB.

Its function is as follows. One of the primary rRNA binding proteins, it binds directly near the 3'-end of the 23S rRNA, where it nucleates assembly of the 50S subunit. The chain is Large ribosomal subunit protein uL3 from Zymomonas mobilis subsp. mobilis (strain ATCC 31821 / ZM4 / CP4).